A 493-amino-acid chain; its full sequence is Mitochondrial distribution and morphology protein 10 (493 aa).

The protein belongs to the MDM10 family. In terms of assembly, component of the ER-mitochondria encounter structure (ERMES) or MDM complex, composed of MMM1, MDM10, MDM12 and MDM34. Associates with the mitochondrial outer membrane sorting assembly machinery SAM(core) complex, which consists of SAM35, SAM37 and SAM50, to form a SAM(holo) complex.

Its subcellular location is the mitochondrion outer membrane. Functionally, component of the ERMES/MDM complex, which serves as a molecular tether to connect the endoplasmic reticulum and mitochondria. Components of this complex are involved in the control of mitochondrial shape and protein biogenesis and may function in phospholipid exchange. MDM10 is involved in the late assembly steps of the general translocase of the mitochondrial outer membrane (TOM complex). Functions in the TOM40-specific route of the assembly of outer membrane beta-barrel proteins, including the association of TOM40 with the receptor TOM22 and small TOM proteins. Can associate with the SAM(core) complex as well as the MDM12-MMM1 complex, both involved in late steps of the major beta-barrel assembly pathway, that is responsible for biogenesis of all outer membrane beta-barrel proteins. May act as a switch that shuttles between both complexes and channels precursor proteins into the TOM40-specific pathway. Plays a role in mitochondrial morphology and in the inheritance of mitochondria. The chain is Mitochondrial distribution and morphology protein 10 from Saccharomyces cerevisiae (strain ATCC 204508 / S288c) (Baker's yeast).